The sequence spans 401 residues: Phosphoglycerate kinase, cytosolic (401 aa).

11 residues coordinate (2R)-3-phosphoglycerate: V24, D25, N27, R41, S63, H64, G66, R67, R122, H154, and R155. G200 is an ADP binding site. G200 contributes to the CDP binding site. Residues K202 and K206 each contribute to the AMP site. K206 is an ATP binding site. ADP is bound at residue G224. G224 is a CDP binding site. Positions 225 and 297 each coordinate AMP. ATP is bound by residues G225 and G297. CDP contacts are provided by G322 and F327. F327 lines the ADP pocket. An AMP-binding site is contributed by E328. The ATP site is built by E328, D359, and S360. D359 serves as a coordination point for Mg(2+).

It belongs to the phosphoglycerate kinase family. As to quaternary structure, monomer. Mg(2+) serves as cofactor.

The protein resides in the cytoplasm. The enzyme catalyses (2R)-3-phosphoglycerate + ATP = (2R)-3-phospho-glyceroyl phosphate + ADP. The protein operates within carbohydrate degradation; glycolysis; pyruvate from D-glyceraldehyde 3-phosphate: step 2/5. The chain is Phosphoglycerate kinase, cytosolic from Nicotiana tabacum (Common tobacco).